Here is a 321-residue protein sequence, read N- to C-terminus: D-alanine--D-alanine ligase (321 aa).

One can recognise an ATP-grasp domain in the interval Arg-121–Lys-315. Residue Pro-147–Gln-199 participates in ATP binding. Residues Glu-268, Glu-282, and Asn-284 each contribute to the Mg(2+) site.

This sequence belongs to the D-alanine--D-alanine ligase family. Mg(2+) is required as a cofactor. The cofactor is Mn(2+).

The protein localises to the cytoplasm. The catalysed reaction is 2 D-alanine + ATP = D-alanyl-D-alanine + ADP + phosphate + H(+). Its pathway is cell wall biogenesis; peptidoglycan biosynthesis. Cell wall formation. The polypeptide is D-alanine--D-alanine ligase (Rickettsia massiliae (strain Mtu5)).